Consider the following 464-residue polypeptide: Mothers against decapentaplegic homolog 5 (464 aa).

The 125-residue stretch at 13–137 (PAVKRLLGWK…YKRVESPVLP (125 aa)) folds into the MH1 domain. Positions 65, 110, 122, and 127 each coordinate Zn(2+). Positions 166 to 258 (HMPLNATFPE…LAPQNMPRGD (93 aa)) are disordered. The span at 173-183 (FPESFQQHSGG) shows a compositional bias: polar residues. The span at 199-216 (ASSGTYPNSPASSGPSSP) shows a compositional bias: low complexity. Over residues 237–251 (QDGSQSMETGSSLAP) the composition is skewed to polar residues. The MH2 domain maps to 270–464 (WCSIVYYELN…SPLNPISSVS (195 aa)).

This sequence belongs to the dwarfin/SMAD family. May form trimers with the co-SMAD SMAD4.

The protein resides in the cytoplasm. It is found in the nucleus. Functionally, involved in ventralization. May mediate Bmp2b signaling during early phases of embryonic dorsal-ventral pattern formation. Required for initiation of Smad1 expression during gastrulation. The protein is Mothers against decapentaplegic homolog 5 (smad5) of Danio rerio (Zebrafish).